A 217-amino-acid polypeptide reads, in one-letter code: Adenylate kinase (217 aa).

10–15 (GAGKGT) provides a ligand contact to ATP. The interval 30-59 (STGDMFRAAMKEETPLGLEAKSYIDKGELV) is NMP. Residues Thr31, Arg36, 57–59 (ELV), 85–88 (GFPR), and Gln92 contribute to the AMP site. An LID region spans residues 126–163 (GRRICSVCGTTYHLVFNPPKTPGICDKDGGELYQRADD). Arg127 lines the ATP pocket. Cys130 and Cys133 together coordinate Zn(2+). Residue 136–137 (TY) coordinates ATP. Zn(2+) contacts are provided by Cys150 and Asp153. AMP is bound by residues Arg160 and Arg171. Gln199 serves as a coordination point for ATP.

Belongs to the adenylate kinase family. Monomer.

It is found in the cytoplasm. It carries out the reaction AMP + ATP = 2 ADP. It functions in the pathway purine metabolism; AMP biosynthesis via salvage pathway; AMP from ADP: step 1/1. In terms of biological role, catalyzes the reversible transfer of the terminal phosphate group between ATP and AMP. Plays an important role in cellular energy homeostasis and in adenine nucleotide metabolism. This Bacillus subtilis (strain 168) protein is Adenylate kinase.